A 399-amino-acid chain; its full sequence is Phosphoglycerate kinase (399 aa).

Substrate contacts are provided by residues 22-24, Arg38, 61-64, Arg120, and Arg153; these read DFN and HLGR. Residues Lys204, Glu326, and 352 to 355 each bind ATP; that span reads GGDT.

The protein belongs to the phosphoglycerate kinase family. Monomer.

Its subcellular location is the cytoplasm. It catalyses the reaction (2R)-3-phosphoglycerate + ATP = (2R)-3-phospho-glyceroyl phosphate + ADP. Its pathway is carbohydrate degradation; glycolysis; pyruvate from D-glyceraldehyde 3-phosphate: step 2/5. In Pelobacter propionicus (strain DSM 2379 / NBRC 103807 / OttBd1), this protein is Phosphoglycerate kinase.